A 474-amino-acid polypeptide reads, in one-letter code: UDP-N-acetylmuramate--L-alanine ligase (474 aa).

122–128 (GTHGKTT) serves as a coordination point for ATP.

The protein belongs to the MurCDEF family.

It localises to the cytoplasm. It catalyses the reaction UDP-N-acetyl-alpha-D-muramate + L-alanine + ATP = UDP-N-acetyl-alpha-D-muramoyl-L-alanine + ADP + phosphate + H(+). It participates in cell wall biogenesis; peptidoglycan biosynthesis. In terms of biological role, cell wall formation. The chain is UDP-N-acetylmuramate--L-alanine ligase from Saccharophagus degradans (strain 2-40 / ATCC 43961 / DSM 17024).